The primary structure comprises 474 residues: Gamma-aminobutyric acid receptor subunit beta-1 (474 aa).

The N-terminal stretch at 1 to 25 (MWTVQNRESLGLLSFPVMITMVCCA) is a signal peptide. Over 26–245 (HSTNEPSNMS…SFRLKRNIGY (220 aa)) the chain is Extracellular. A glycan (N-linked (GlcNAc...) asparagine) is linked at N105. Y122 contacts histamine. C161 and C175 form a disulfide bridge. N174 carries N-linked (GlcNAc...) asparagine glycosylation. Residues 181–182 (SY) and T227 contribute to the histamine site. 4-aminobutanoate contacts are provided by Y182 and T227. The next 3 helical transmembrane spans lie at 246-267 (FILQ…SFWI), 271-293 (ASAA…STHL), and 305-327 (AIDI…YAFV). Topologically, residues 328 to 451 (NYIFFGKGPQ…DLTDVNSIDK (124 aa)) are cytoplasmic. A helical transmembrane segment spans residues 452–473 (WSRMFFPITFSLFNVVYWLYYV).

This sequence belongs to the ligand-gated ion channel (TC 1.A.9) family. Gamma-aminobutyric acid receptor (TC 1.A.9.5) subfamily. GABRB1 sub-subfamily. In terms of assembly, heteropentamer, formed by a combination of alpha (GABRA1-6), beta (GABRB1-3), gamma (GABRG1-3), delta (GABRD), epsilon (GABRE), rho (GABRR1-3), pi (GABRP) and theta (GABRQ) chains, each subunit exhibiting distinct physiological and pharmacological properties. Binds UBQLN1.

Its subcellular location is the postsynaptic cell membrane. It localises to the cell membrane. It carries out the reaction chloride(in) = chloride(out). Potentiated by etomidate, propofol, pregnanolone and flurazepam. Potentiated by histamine. Functionally, beta subunit of the heteropentameric ligand-gated chloride channel gated by gamma-aminobutyric acid (GABA), a major inhibitory neurotransmitter in the brain. GABA-gated chloride channels, also named GABA(A) receptors (GABAAR), consist of five subunits arranged around a central pore and contain one or two GABA active binding sites located at the alpha and beta subunit interfaces, depending on subunit composition. When activated by GABA, GABAARs selectively allow the flow of chloride anions across the cell membrane down their electrochemical gradient. Chloride influx into the postsynaptic neuron following GABAAR opening decreases the neuron ability to generate a new action potential, thereby reducing nerve transmission. Beta-containing GABAARs can simultaneously bind GABA and histamine where histamine binds at the interface of two neighboring beta subunits, which may be involved in the regulation of sleep and wakefulness. The chain is Gamma-aminobutyric acid receptor subunit beta-1 from Homo sapiens (Human).